Reading from the N-terminus, the 553-residue chain is Formate--tetrahydrofolate ligase 2 (553 aa).

63-70 serves as a coordination point for ATP; the sequence is TSAGEGKS.

This sequence belongs to the formate--tetrahydrofolate ligase family.

It catalyses the reaction (6S)-5,6,7,8-tetrahydrofolate + formate + ATP = (6R)-10-formyltetrahydrofolate + ADP + phosphate. The protein operates within one-carbon metabolism; tetrahydrofolate interconversion. The chain is Formate--tetrahydrofolate ligase 2 from Lactobacillus acidophilus (strain ATCC 700396 / NCK56 / N2 / NCFM).